A 243-amino-acid polypeptide reads, in one-letter code: Orotidine 5'-phosphate decarboxylase (243 aa).

Residues aspartate 16, lysine 38, 65–74 (DLKLHDIPNT), threonine 120, arginine 181, glutamine 190, glycine 210, and arginine 211 contribute to the substrate site. The active-site Proton donor is lysine 67.

It belongs to the OMP decarboxylase family. Type 1 subfamily. Homodimer.

It carries out the reaction orotidine 5'-phosphate + H(+) = UMP + CO2. The protein operates within pyrimidine metabolism; UMP biosynthesis via de novo pathway; UMP from orotate: step 2/2. Catalyzes the decarboxylation of orotidine 5'-monophosphate (OMP) to uridine 5'-monophosphate (UMP). This chain is Orotidine 5'-phosphate decarboxylase, found in Bradyrhizobium sp. (strain ORS 278).